The sequence spans 97 residues: Aspartyl/glutamyl-tRNA(Asn/Gln) amidotransferase subunit C (97 aa).

It belongs to the GatC family. As to quaternary structure, heterotrimer of A, B and C subunits.

It carries out the reaction L-glutamyl-tRNA(Gln) + L-glutamine + ATP + H2O = L-glutaminyl-tRNA(Gln) + L-glutamate + ADP + phosphate + H(+). The enzyme catalyses L-aspartyl-tRNA(Asn) + L-glutamine + ATP + H2O = L-asparaginyl-tRNA(Asn) + L-glutamate + ADP + phosphate + 2 H(+). Its function is as follows. Allows the formation of correctly charged Asn-tRNA(Asn) or Gln-tRNA(Gln) through the transamidation of misacylated Asp-tRNA(Asn) or Glu-tRNA(Gln) in organisms which lack either or both of asparaginyl-tRNA or glutaminyl-tRNA synthetases. The reaction takes place in the presence of glutamine and ATP through an activated phospho-Asp-tRNA(Asn) or phospho-Glu-tRNA(Gln). The polypeptide is Aspartyl/glutamyl-tRNA(Asn/Gln) amidotransferase subunit C (Synechococcus sp. (strain CC9902)).